Here is a 211-residue protein sequence, read N- to C-terminus: MVKLILVRHAESEWNPVGRYQGLLDPDLSERGKKQAKLLAQELSREHLDVIYSSPLKRTYLTALEIAEAKNLEVIKEDRIIEIDHGMWSGMLVEEVMEKYPEDFRRWVEEPHKVEFQGGESLASVYNRVKGFLEEVRKRHWNQTVVVVSHTVPMRAMYCALLGVDLSKFWSFGCDNASYSVIHMEERRNVILKLNITCHLGEFYVEAHKAI.

His9 functions as the Tele-phosphohistidine intermediate in the catalytic mechanism. His150 is an active-site residue.

It belongs to the histidine phosphatase superfamily. Metal-independent phosphoserine phosphatase family. As to quaternary structure, homodimer. Can also form a heterodimer with PspB.

It carries out the reaction O-phospho-L-serine + H2O = L-serine + phosphate. The catalysed reaction is O-phospho-D-serine + H2O = D-serine + phosphate. It participates in amino-acid biosynthesis; L-serine biosynthesis; L-serine from 3-phospho-D-glycerate: step 3/3. Its activity is regulated as follows. Activity is not inhibited by EDTA in vitro, nor enhanced by the addition of Mg(2+). Catalyzes the dephosphorylation of L-phosphoserine to serine and inorganic phosphate. Is poorly or not active toward D-phosphoserine, DL-phosphothreonine, 3-phosphoglycerate, para-nitrophenylphosphate, and fructose-6-phosphate. Does not display phosphoglycerate mutase activity. This is Phosphoserine phosphatase 1 (pspA) from Hydrogenobacter thermophilus (strain DSM 6534 / IAM 12695 / TK-6).